The chain runs to 24 residues: Humanin-like 12 (24 aa).

The protein belongs to the humanin family.

It is found in the secreted. It localises to the cytoplasm. Its function is as follows. Plays a role as a neuroprotective and antiapoptotic factor. This is Humanin-like 12 from Homo sapiens (Human).